Reading from the N-terminus, the 715-residue chain is uncharacterized protein (715 aa).

This is an uncharacterized protein from Mycobacterium tuberculosis (strain CDC 1551 / Oshkosh).